The chain runs to 191 residues: Large ribosomal subunit protein bL12cz (191 aa).

The N-terminal 58 residues, 1 to 58 (MASTTLSIATTIRSSSYPTLASINHFPSRTTTIEFPSRFGGGSSSTLTHRATHLRPIA), are a transit peptide targeting the chloroplast.

The protein belongs to the bacterial ribosomal protein bL12 family.

The protein localises to the plastid. Its subcellular location is the chloroplast. In Arabidopsis thaliana (Mouse-ear cress), this protein is Large ribosomal subunit protein bL12cz (RPL12A).